The following is a 2419-amino-acid chain: Telomere-associated protein RIF1 (2419 aa).

Disordered regions lie at residues 1–24 and 373–408; these read MTAP…VPPG and SIPS…SPRG. The segment covering 373-385 has biased composition (polar residues); the sequence is SIPSPQGNSSRGS. 5 positions are modified to phosphoserine: serine 385, serine 391, serine 779, serine 976, and serine 1005. Threonine 1044 bears the Phosphothreonine mark. The segment covering 1184-1198 has biased composition (low complexity); sequence SSSTETSVVSSSSVS. 2 disordered regions span residues 1184-1594 and 1613-1637; these read SSST…QAVP and RVIL…EKSK. 2 stretches are compositionally biased toward polar residues: residues 1199–1217 and 1228–1255; these read NATF…QTFI and RPFS…TNTD. Threonine 1215 is modified (phosphothreonine). Residues serine 1231 and serine 1233 each carry the phosphoserine modification. A compositionally biased stretch (basic and acidic residues) spans 1263–1272; sequence REVTNSKSDS. Residues 1289 to 1302 show a composition bias toward polar residues; sequence AEQSVTKKSKPSLT. The span at 1323–1345 shows a compositional bias: basic and acidic residues; that stretch reads HVSENDDHPSEATLEHKDGDPKP. Residues serine 1407, serine 1439, serine 1457, and serine 1498 each carry the phosphoserine modification. A compositionally biased stretch (basic and acidic residues) spans 1416-1455; the sequence is SQERESGQQKKERRKEEEKIISKSPLRIKDDKLPTQKLTD. Positions 1457 to 1467 are enriched in polar residues; sequence SPIQENLTEKG. Phosphothreonine is present on threonine 1504. The span at 1507 to 1516 shows a compositional bias: basic and acidic residues; the sequence is NLDKSSEKPL. Positions 1525-1537 are enriched in polar residues; that stretch reads RRASQGLISAVEN. Phosphoserine is present on residues serine 1528, serine 1538, serine 1540, serine 1542, and serine 1550. Residues 1551–1560 show a composition bias toward basic residues; the sequence is RKKRSGKWKN. Serine 1562 and serine 1565 each carry phosphoserine. Basic and acidic residues predominate over residues 1572–1581; that stretch reads EEKKAEEEVM. Phosphoserine is present on residues serine 1680 and serine 1683. Threonine 1780 carries the phosphothreonine modification. Serine 1784 bears the Phosphoserine mark. A disordered region spans residues 1812–1836; the sequence is ASEAVSEIQGPCSENHSPAEDPGLS. Serine 1842 carries the post-translational modification Phosphoserine. The interaction with condensed chromosomes in telophase stretch occupies residues 1882-2419; it reads DAFVAADSEK…RWRSPAHENS (538 aa). Disordered regions lie at residues 1890 to 1914 and 1929 to 1983; these read EKST…ECEA and FNSG…AQMS. Phosphoserine is present on residues serine 1931, serine 2094, serine 2109, serine 2121, serine 2125, serine 2144, serine 2153, serine 2208, serine 2287, serine 2341, serine 2413, and serine 2419. An interaction with ERCC6 region spans residues 2119 to 2394; that stretch reads VWSPLASPST…TGSQLFEMHE (276 aa). The tract at residues 2182-2212 is disordered; that stretch reads SPIIKSVKTSPTSHSKHNTTSAKGFLSPGSQ. Over residues 2189 to 2212 the composition is skewed to polar residues; sequence KTSPTSHSKHNTTSAKGFLSPGSQ.

The protein belongs to the RIF1 family. Interacts with TP53BP1 (when phosphorylated by ATM). May interact with TRF2. Interacts with SHLD2. Interacts with ERCC6 (via WHD region). Interacts with ASTE1. As to expression, expressed in Sertoli cells, prospermatagonia, early primary spermatocytes, and in oocytes at all stages of their growth. Expressed in embryonic stem (ES) and embryonic germ (EG) cells: expression is lost upon differentiation.

It is found in the nucleus. Its subcellular location is the chromosome. The protein localises to the telomere. The protein resides in the cytoplasm. It localises to the cytoskeleton. It is found in the spindle. Functionally, key regulator of TP53BP1 that plays a key role in the repair of double-strand DNA breaks (DSBs) in response to DNA damage: acts by promoting non-homologous end joining (NHEJ)-mediated repair of DSBs. In response to DNA damage, interacts with ATM-phosphorylated TP53BP1. Interaction with TP53BP1 leads to dissociate the interaction between NUDT16L1/TIRR and TP53BP1, thereby unmasking the tandem Tudor-like domain of TP53BP1 and allowing recruitment to DNA DSBs. Once recruited to DSBs, RIF1 and TP53BP1 act by promoting NHEJ-mediated repair of DSBs. In the same time, RIF1 and TP53BP1 specifically counteract the function of BRCA1 by blocking DSBs resection via homologous recombination (HR) during G1 phase. Also required for immunoglobulin class-switch recombination (CSR) during antibody genesis, a process that involves the generation of DNA DSBs. Promotes NHEJ of dysfunctional telomeres. In Mus musculus (Mouse), this protein is Telomere-associated protein RIF1.